The chain runs to 396 residues: Tryptophan synthase beta chain (396 aa).

K86 carries the N6-(pyridoxal phosphate)lysine modification.

Belongs to the TrpB family. In terms of assembly, tetramer of two alpha and two beta chains. Requires pyridoxal 5'-phosphate as cofactor.

It carries out the reaction (1S,2R)-1-C-(indol-3-yl)glycerol 3-phosphate + L-serine = D-glyceraldehyde 3-phosphate + L-tryptophan + H2O. Its pathway is amino-acid biosynthesis; L-tryptophan biosynthesis; L-tryptophan from chorismate: step 5/5. In terms of biological role, the beta subunit is responsible for the synthesis of L-tryptophan from indole and L-serine. In Francisella philomiragia subsp. philomiragia (strain ATCC 25017 / CCUG 19701 / FSC 153 / O#319-036), this protein is Tryptophan synthase beta chain.